The chain runs to 1088 residues: Platelet-derived growth factor receptor alpha (1088 aa).

A signal peptide spans 1 to 23; sequence MGTSQAFLVLSCLLTGPSLIVCQ. Ig-like C2-type domains are found at residues 24–112, 116–200, 201–305, 318–409, and 413–516; these read LLLP…SEIE, IYIY…FKTS, EFNV…KTVT, PTFG…FELS, and PASI…LKLV. The Extracellular portion of the chain corresponds to 24 to 527; the sequence is LLLPSILPNE…PSLRSELTVA (504 aa). Cys48 and Cys99 are joined by a disulfide. Asn75, Asn102, and Asn178 each carry an N-linked (GlcNAc...) asparagine glycan. 2 disulfide bridges follow: Cys149-Cys188 and Cys234-Cys289. N-linked (GlcNAc...) asparagine glycosylation is found at Asn352, Asn358, Asn457, and Asn467. A disulfide bridge connects residues Cys434 and Cys500. The chain crosses the membrane as a helical span at residues 528–548; the sequence is AAVLVLLVIVIVSLIVLVVIW. Over 549-1088 the chain is Cytoplasmic; the sequence is KQKPRYEIRW…SSDLVEDSFL (540 aa). Phosphotyrosine; by autocatalysis occurs at positions 571 and 573. The region spanning 592 to 953 is the Protein kinase domain; that stretch reads LVLGRILGSG…HLSEIVENLL (362 aa). Residues 598–606 and Lys626 contribute to the ATP site; that span reads LGSGAFGKV. Residues Tyr719, Tyr730, Tyr741, Tyr753, Tyr761, and Tyr767 each carry the phosphotyrosine; by autocatalysis modification. Asp817 acts as the Proton acceptor in catalysis. 3 positions are modified to phosphotyrosine; by autocatalysis: Tyr848, Tyr987, and Tyr1017. The segment at 1017–1088 is disordered; the sequence is YIIPLPDIDP…SSDLVEDSFL (72 aa). Over residues 1040-1058 the composition is skewed to polar residues; that stretch reads SSQTSEESAIETGSSSSTF. Acidic residues predominate over residues 1064–1088; sequence ETIEDIDMMDDIGIDSSDLVEDSFL.

The protein belongs to the protein kinase superfamily. Tyr protein kinase family. CSF-1/PDGF receptor subfamily. As to quaternary structure, interacts with homodimeric PDGFA, PDGFB and PDGFC, and with heterodimers formed by PDGFA and PDGFB. Monomer in the absence of bound ligand. Interaction with dimeric PDGFA, PDGFB and/or PDGFC leads to receptor dimerization, where both PDGFRA homodimers and heterodimers with PDGFRB are observed. Interacts (tyrosine phosphorylated) with SHB (via SH2 domain). Interacts (tyrosine phosphorylated) with SHF (via SH2 domain). Interacts (tyrosine phosphorylated) with SRC (via SH2 domain). Interacts (tyrosine phosphorylated) with PIK3R1. Interacts (tyrosine phosphorylated) with PLCG1 (via SH2 domain). Interacts (tyrosine phosphorylated) with CRK, GRB2 and GRB7. Interacts with CD248; this interaction promotes PDGF receptor signaling pathway. Ubiquitinated, leading to its internalization and degradation. Post-translationally, autophosphorylated on tyrosine residues upon ligand binding. Autophosphorylation occurs in trans, i.e. one subunit of the dimeric receptor phosphorylates tyrosine residues on the other subunit. Phosphorylation at Tyr-730 and Tyr-741 is important for interaction with PIK3R1. Phosphorylation at Tyr-719 and Tyr-753 is important for interaction with PTPN11. Phosphorylation at Tyr-761 is important for interaction with CRK. Phosphorylation at Tyr-571 and Tyr-573 is important for interaction with SRC and SRC family members. Phosphorylation at Tyr-987 and Tyr-1017 is important for interaction with PLCG1.

The protein localises to the cell membrane. It is found in the cell projection. The protein resides in the cilium. It localises to the golgi apparatus. The enzyme catalyses L-tyrosyl-[protein] + ATP = O-phospho-L-tyrosyl-[protein] + ADP + H(+). With respect to regulation, present in an inactive conformation in the absence of bound ligand. Binding of PDGFA and/or PDGFB leads to dimerization and activation by autophosphorylation on tyrosine residues. Inhibited by imatinib, nilotinib and sorafenib. Tyrosine-protein kinase that acts as a cell-surface receptor for PDGFA, PDGFB and PDGFC and plays an essential role in the regulation of embryonic development, cell proliferation, survival and chemotaxis. Depending on the context, promotes or inhibits cell proliferation and cell migration. Plays an important role in the differentiation of bone marrow-derived mesenchymal stem cells. Required for normal skeleton development and cephalic closure during embryonic development. Required for normal development of the mucosa lining the gastrointestinal tract, and for recruitment of mesenchymal cells and normal development of intestinal villi. Plays a role in cell migration and chemotaxis in wound healing. Plays a role in platelet activation, secretion of agonists from platelet granules, and in thrombin-induced platelet aggregation. Binding of its cognate ligands - homodimeric PDGFA, homodimeric PDGFB, heterodimers formed by PDGFA and PDGFB or homodimeric PDGFC -leads to the activation of several signaling cascades; the response depends on the nature of the bound ligand and is modulated by the formation of heterodimers between PDGFRA and PDGFRB. Phosphorylates PIK3R1, PLCG1, and PTPN11. Activation of PLCG1 leads to the production of the cellular signaling molecules diacylglycerol and inositol 1,4,5-trisphosphate, mobilization of cytosolic Ca(2+) and the activation of protein kinase C. Phosphorylates PIK3R1, the regulatory subunit of phosphatidylinositol 3-kinase, and thereby mediates activation of the AKT1 signaling pathway. Mediates activation of HRAS and of the MAP kinases MAPK1/ERK2 and/or MAPK3/ERK1. Promotes activation of STAT family members STAT1, STAT3 and STAT5A and/or STAT5B. Receptor signaling is down-regulated by protein phosphatases that dephosphorylate the receptor and its down-stream effectors, and by rapid internalization of the activated receptor. This Rattus norvegicus (Rat) protein is Platelet-derived growth factor receptor alpha (Pdgfra).